The following is a 250-amino-acid chain: Ubiquinone/menaquinone biosynthesis C-methyltransferase UbiE (250 aa).

Residues T74, D94, D122–A123, and S139 each bind S-adenosyl-L-methionine.

The protein belongs to the class I-like SAM-binding methyltransferase superfamily. MenG/UbiE family.

The enzyme catalyses a 2-demethylmenaquinol + S-adenosyl-L-methionine = a menaquinol + S-adenosyl-L-homocysteine + H(+). It carries out the reaction a 2-methoxy-6-(all-trans-polyprenyl)benzene-1,4-diol + S-adenosyl-L-methionine = a 5-methoxy-2-methyl-3-(all-trans-polyprenyl)benzene-1,4-diol + S-adenosyl-L-homocysteine + H(+). It functions in the pathway quinol/quinone metabolism; menaquinone biosynthesis; menaquinol from 1,4-dihydroxy-2-naphthoate: step 2/2. It participates in cofactor biosynthesis; ubiquinone biosynthesis. Its function is as follows. Methyltransferase required for the conversion of demethylmenaquinol (DMKH2) to menaquinol (MKH2) and the conversion of 2-polyprenyl-6-methoxy-1,4-benzoquinol (DDMQH2) to 2-polyprenyl-3-methyl-6-methoxy-1,4-benzoquinol (DMQH2). This Paracoccus denitrificans (strain Pd 1222) protein is Ubiquinone/menaquinone biosynthesis C-methyltransferase UbiE.